The chain runs to 779 residues: Probable phosphoketolase 2 (779 aa).

The protein belongs to the XFP family. It depends on thiamine diphosphate as a cofactor.

The sequence is that of Probable phosphoketolase 2 from Rhizobium meliloti (strain 1021) (Ensifer meliloti).